A 607-amino-acid polypeptide reads, in one-letter code: Elongation factor 4 (607 aa).

One can recognise a tr-type G domain in the interval 11-193; that stretch reads KNIRNFSIIA…KIVEVVPPPE (183 aa). Residues 23–28 and 140–143 contribute to the GTP site; these read DHGKST and NKID.

It belongs to the TRAFAC class translation factor GTPase superfamily. Classic translation factor GTPase family. LepA subfamily.

It localises to the cell membrane. The enzyme catalyses GTP + H2O = GDP + phosphate + H(+). Functionally, required for accurate and efficient protein synthesis under certain stress conditions. May act as a fidelity factor of the translation reaction, by catalyzing a one-codon backward translocation of tRNAs on improperly translocated ribosomes. Back-translocation proceeds from a post-translocation (POST) complex to a pre-translocation (PRE) complex, thus giving elongation factor G a second chance to translocate the tRNAs correctly. Binds to ribosomes in a GTP-dependent manner. The chain is Elongation factor 4 from Staphylococcus saprophyticus subsp. saprophyticus (strain ATCC 15305 / DSM 20229 / NCIMB 8711 / NCTC 7292 / S-41).